We begin with the raw amino-acid sequence, 517 residues long: GMP synthase [glutamine-hydrolyzing] (517 aa).

A Glutamine amidotransferase type-1 domain is found at 11 to 202 (KIIVLDFGSQ…AFDVCGAKDN (192 aa)). The active-site Nucleophile is the C88. Active-site residues include H176 and E178. The GMPS ATP-PPase domain occupies 203–392 (WTMDDFIKLS…LGLPHDLVWR (190 aa)). 230–236 (SGGVDSS) provides a ligand contact to ATP.

As to quaternary structure, homodimer.

It catalyses the reaction XMP + L-glutamine + ATP + H2O = GMP + L-glutamate + AMP + diphosphate + 2 H(+). It participates in purine metabolism; GMP biosynthesis; GMP from XMP (L-Gln route): step 1/1. Catalyzes the synthesis of GMP from XMP. This chain is GMP synthase [glutamine-hydrolyzing], found in Lactobacillus delbrueckii subsp. bulgaricus (strain ATCC 11842 / DSM 20081 / BCRC 10696 / JCM 1002 / NBRC 13953 / NCIMB 11778 / NCTC 12712 / WDCM 00102 / Lb 14).